The chain runs to 570 residues: Proline--tRNA ligase (570 aa).

It belongs to the class-II aminoacyl-tRNA synthetase family. ProS type 1 subfamily. As to quaternary structure, homodimer.

Its subcellular location is the cytoplasm. The enzyme catalyses tRNA(Pro) + L-proline + ATP = L-prolyl-tRNA(Pro) + AMP + diphosphate. Functionally, catalyzes the attachment of proline to tRNA(Pro) in a two-step reaction: proline is first activated by ATP to form Pro-AMP and then transferred to the acceptor end of tRNA(Pro). As ProRS can inadvertently accommodate and process non-cognate amino acids such as alanine and cysteine, to avoid such errors it has two additional distinct editing activities against alanine. One activity is designated as 'pretransfer' editing and involves the tRNA(Pro)-independent hydrolysis of activated Ala-AMP. The other activity is designated 'posttransfer' editing and involves deacylation of mischarged Ala-tRNA(Pro). The misacylated Cys-tRNA(Pro) is not edited by ProRS. The sequence is that of Proline--tRNA ligase from Pelotomaculum thermopropionicum (strain DSM 13744 / JCM 10971 / SI).